The chain runs to 216 residues: Thiopurine S-methyltransferase (216 aa).

Residues W10, L45, E66, and R123 each contribute to the S-adenosyl-L-methionine site.

Belongs to the class I-like SAM-binding methyltransferase superfamily. TPMT family.

The protein resides in the cytoplasm. It carries out the reaction S-adenosyl-L-methionine + a thiopurine = S-adenosyl-L-homocysteine + a thiopurine S-methylether.. The chain is Thiopurine S-methyltransferase from Pseudomonas putida (strain ATCC 700007 / DSM 6899 / JCM 31910 / BCRC 17059 / LMG 24140 / F1).